Reading from the N-terminus, the 168-residue chain is Phosphopantetheine adenylyltransferase (168 aa).

Serine 8 provides a ligand contact to substrate. Residues 8-9 and histidine 16 contribute to the ATP site; that span reads SF. Substrate contacts are provided by lysine 40, alanine 72, and arginine 86. Residues 87 to 89, glutamate 97, and 122 to 128 each bind ATP; these read GLR and YSFLSSS.

The protein belongs to the bacterial CoaD family. Homohexamer. Requires Mg(2+) as cofactor.

Its subcellular location is the cytoplasm. It catalyses the reaction (R)-4'-phosphopantetheine + ATP + H(+) = 3'-dephospho-CoA + diphosphate. The protein operates within cofactor biosynthesis; coenzyme A biosynthesis; CoA from (R)-pantothenate: step 4/5. Reversibly transfers an adenylyl group from ATP to 4'-phosphopantetheine, yielding dephospho-CoA (dPCoA) and pyrophosphate. The protein is Phosphopantetheine adenylyltransferase of Trichodesmium erythraeum (strain IMS101).